Reading from the N-terminus, the 708-residue chain is MATTRGGSGPDPGSRGLLLLSFSVVLAGLCGGNSVERKIYIPLNKTAPCVRLLNATHQIGCQSSISGDTGVIHVVEKEEDLKWVLTDGPNPPYMVLLEGKLFTRDVMEKLKGTTSRIAGLAVTLAKPNSTSSFSPSVQCPNDGFGIYSNSYGPEFAHCKKTLWNELGNGLAYEDFSFPIFLLEDENETKVIKQCYQDHNLGQNGSAPSFPLCAMQLFSHMHAVISTATCMRRSFIQSTFSINPEIVCDPLSDYNVWSMLKPINTSVGLEPDVRVVVAATRLDSRSFFWNVAPGAESAVASFVTQLAAAEALHKAPDVTTLSRNVMFVFFQGETFDYIGSSRMVYDMENGKFPVRLENIDSFVELGQVALRTSLDLWMHTDPMSQKNESVKNQVEDLLATLEKSGAGVPEVVLRRLAQSQALPPSSLQRFLRARNISGVVLADHSGSFHNRYYQSIYDTAENINVTYPEWQSPEEDLNFVTDTAKALANVATVLARALYELAGGTNFSSSIQADPQTVTRLLYGFLVRANNSWFQSILKHDLRSYLDDRPLQHYIAVSSPTNTTYVVQYALANLTGKATNLTREQCQDPSKVPNESKDLYEYSWVQGPWNSNRTERLPQCVRSTVRLARALSPAFELSQWSSTEYSTWAESRWKDIQARIFLIASKELEFITLIVGFSTLVFSLIVTYCINAKADVLFVAPREPGAVSY.

The N-terminal stretch at 1–27 (MATTRGGSGPDPGSRGLLLLSFSVVLA) is a signal peptide. The Lumenal portion of the chain corresponds to 28 to 668 (GLCGGNSVER…IFLIASKELE (641 aa)). Residues Asn44, Asn54, and Asn128 are each glycosylated (N-linked (GlcNAc...) asparagine). Cysteines 49 and 61 form a disulfide. Cys139 and Cys158 are disulfide-bonded. N-linked (GlcNAc...) asparagine glycans are attached at residues Asn186 and Asn203. Intrachain disulfides connect Cys194–Cys212 and Cys229–Cys247. N-linked (GlcNAc...) asparagine glycosylation is found at Asn263, Asn386, Asn434, Asn463, Asn505, Asn529, Asn561, Asn572, Asn579, Asn593, and Asn611. The cysteines at positions 585 and 619 are disulfide-linked. The helical transmembrane segment at 669-689 (FITLIVGFSTLVFSLIVTYCI) threads the bilayer. Residues 690–708 (NAKADVLFVAPREPGAVSY) are Cytoplasmic-facing.

Belongs to the nicastrin family. As to quaternary structure, component of the gamma-secretase complex. The functional gamma-secretase complex is composed of at least four polypeptides: a presenilin homodimer (PSEN1 or PSEN2), nicastrin (NCSTN), APH1 (APH1A or APH1B) and PEN2. Binds to proteolytic processed C-terminal fragments C83 and C99 of the amyloid precursor protein (APP). Interacts with PSEN1 and PSEN2. In terms of processing, N-glycosylated.

It localises to the membrane. The protein localises to the cytoplasmic vesicle membrane. It is found in the melanosome. Its function is as follows. Essential subunit of the gamma-secretase complex, an endoprotease complex that catalyzes the intramembrane cleavage of integral membrane proteins such as Notch receptors and APP (amyloid-beta precursor protein). The gamma-secretase complex plays a role in Notch and Wnt signaling cascades and regulation of downstream processes via its role in processing key regulatory proteins, and by regulating cytosolic CTNNB1 levels. In Mus musculus (Mouse), this protein is Nicastrin (Ncstn).